A 206-amino-acid chain; its full sequence is Delta and osm-11 homolog protein 1 (206 aa).

This is Delta and osm-11 homolog protein 1 (dos-1) from Caenorhabditis elegans.